Here is a 309-residue protein sequence, read N- to C-terminus: uncharacterized protein (309 aa).

This is an uncharacterized protein from Aquifex aeolicus (strain VF5).